The primary structure comprises 393 residues: MSPRPEKRRVSIFGATGSIGQNTIDLIARAPEAYDVVALTGARNIAQLAADARRLSASIAVTAEEELLPDLRAALEGSGVEAAAGEAALLEAADRPADWIMSAIVGAAGLAPGFRALRHGTTLALANKESLVTAGPLLLAEAATHGATILPVDSEHSAVFQALVGEDIAAVERIIITASGGGLRDWPEDDLARATPADAGAHPNWDMGQRITIDSASMFNKAMELIETKEFFGVSPARIEAVVHPQSLIHALVGFTDGALMAHLGPPDMRHAIGYALNYPDRAHLPVDRLDLAQIARLEFHAPSDTRYPALKIAREVMQTGGQSGCIFNAAKEIALDGFLAGKIGFMDMSGIVSDTLDAMSSKNSLSNAPETLEDVLQTDQMARNIASARLAR.

NADPH contacts are provided by Thr-16, Gly-17, Ser-18, Ile-19, Ala-42, Arg-43, Asn-44, and Asn-127. Lys-128 is a 1-deoxy-D-xylulose 5-phosphate binding site. Glu-129 contributes to the NADPH binding site. Asp-153 lines the Mn(2+) pocket. Ser-154, Glu-155, Ser-179, and His-202 together coordinate 1-deoxy-D-xylulose 5-phosphate. Position 155 (Glu-155) interacts with Mn(2+). Gly-208 provides a ligand contact to NADPH. The 1-deoxy-D-xylulose 5-phosphate site is built by Ser-215, Asn-220, Lys-221, and Glu-224. Glu-224 provides a ligand contact to Mn(2+).

This sequence belongs to the DXR family. Mg(2+) is required as a cofactor. The cofactor is Mn(2+).

The catalysed reaction is 2-C-methyl-D-erythritol 4-phosphate + NADP(+) = 1-deoxy-D-xylulose 5-phosphate + NADPH + H(+). It participates in isoprenoid biosynthesis; isopentenyl diphosphate biosynthesis via DXP pathway; isopentenyl diphosphate from 1-deoxy-D-xylulose 5-phosphate: step 1/6. Its function is as follows. Catalyzes the NADPH-dependent rearrangement and reduction of 1-deoxy-D-xylulose-5-phosphate (DXP) to 2-C-methyl-D-erythritol 4-phosphate (MEP). This is 1-deoxy-D-xylulose 5-phosphate reductoisomerase from Jannaschia sp. (strain CCS1).